A 369-amino-acid polypeptide reads, in one-letter code: Biglycan (369 aa).

The signal sequence occupies residues methionine 1–alanine 16. Residues leucine 17 to asparagine 37 constitute a propeptide that is removed on maturation. O-linked (Xyl...) (glycosaminoglycan) serine glycosylation is found at serine 42 and serine 48. Disulfide bonds link cysteine 64/cysteine 70 and cysteine 68/cysteine 77. 12 LRR repeats span residues lysine 83–isoleucine 103, serine 104–isoleucine 127, serine 128–leucine 151, valine 152–isoleucine 172, arginine 173–leucine 196, glutamate 197–leucine 221, threonine 222–isoleucine 242, glutamine 243–isoleucine 266, arginine 267–leucine 290, serine 291–isoleucine 313, threonine 314–valine 343, and proline 344–lysine 369. 2 N-linked (GlcNAc...) asparagine glycosylation sites follow: asparagine 271 and asparagine 312. An intrachain disulfide couples cysteine 322 to cysteine 355.

It belongs to the small leucine-rich proteoglycan (SLRP) family. SLRP class I subfamily. As to quaternary structure, homodimer. Forms a ternary complex with MFAP2 and ELN. Post-translationally, the two attached glycosaminoglycan chains can be either chondroitin sulfate or dermatan sulfate.

The protein resides in the secreted. Its subcellular location is the extracellular space. It localises to the extracellular matrix. Functionally, may be involved in collagen fiber assembly. The chain is Biglycan (BGN) from Canis lupus familiaris (Dog).